Consider the following 206-residue polypeptide: Small ribosomal subunit protein uS4 (206 aa).

The region spanning 96–161 is the S4 RNA-binding domain; that stretch reads RRLDNVVYRM…QGRIQAALAL (66 aa).

The protein belongs to the universal ribosomal protein uS4 family. As to quaternary structure, part of the 30S ribosomal subunit. Contacts protein S5. The interaction surface between S4 and S5 is involved in control of translational fidelity.

In terms of biological role, one of the primary rRNA binding proteins, it binds directly to 16S rRNA where it nucleates assembly of the body of the 30S subunit. Its function is as follows. With S5 and S12 plays an important role in translational accuracy. This Legionella pneumophila (strain Paris) protein is Small ribosomal subunit protein uS4.